We begin with the raw amino-acid sequence, 172 residues long: Keratin, high-sulfur matrix protein, B2A (172 aa).

An N-acetylalanine modification is found at Ala2. 5 repeats span residues 27–36 (PTCCQTSCCQ), 37–46 (PTSIQTSCCQ), 47–56 (PISIQTSCCQ), 57–66 (PTSIQTSCCQ), and 67–76 (PTCLQTSGCE).

Its function is as follows. The keratin products of mammalian epidermal derivatives such as wool and hair consist of microfibrils embedded in a rigid matrix of other proteins. The matrix proteins include the high-sulfur and high-tyrosine keratins, having molecular weights of 6-20 kDa, whereas the microfibrils contain the larger, low-sulfur keratins (40-56 kDa). This chain is Keratin, high-sulfur matrix protein, B2A, found in Ovis aries (Sheep).